The primary structure comprises 297 residues: Protoheme IX farnesyltransferase (297 aa).

Helical transmembrane passes span 23–43 (VTQLAVFCAVIGMFLAAPGMP), 49–69 (VFGTLGIWLLAAAAFAINCLI), 93–113 (IQVLSLSGLLGGAGMLVLYHL), 117–137 (LTMWLTFATFVGYAIIYTVIL), 144–164 (NIVIGGLSGAMPPALGWAAVA), 171–191 (AWVLVLIIFIWTPPHFWALAL), 215–235 (RLHILLYSFALLATTLLPYAI), 238–258 (SGALYLASALALGGMFVWYAW), and 275–295 (FSILYLALLFGALLIDHWVGL).

This sequence belongs to the UbiA prenyltransferase family. Protoheme IX farnesyltransferase subfamily.

The protein localises to the cell inner membrane. It catalyses the reaction heme b + (2E,6E)-farnesyl diphosphate + H2O = Fe(II)-heme o + diphosphate. It participates in porphyrin-containing compound metabolism; heme O biosynthesis; heme O from protoheme: step 1/1. Its function is as follows. Converts heme B (protoheme IX) to heme O by substitution of the vinyl group on carbon 2 of heme B porphyrin ring with a hydroxyethyl farnesyl side group. The polypeptide is Protoheme IX farnesyltransferase (Bordetella pertussis (strain Tohama I / ATCC BAA-589 / NCTC 13251)).